We begin with the raw amino-acid sequence, 278 residues long: Beta-lactamase-like protein str5 (278 aa).

Residues 20 to 37 traverse the membrane as a helical segment; the sequence is VFVLAALLSATFAFFTHT. N112 carries an N-linked (GlcNAc...) asparagine glycan.

It belongs to the beta-lactamase family.

It localises to the membrane. It participates in mycotoxin biosynthesis. Functionally, beta-lactamase-like protein; part of the gene cluster that mediates the biosynthesis of strobilurin A, an antifungal polyketide that contains a key beta-methoxyacrylate toxophore that targets the complex III of the mitochondrial electron transport chain. Strobilurin biosynthesis begins with construction of benzoyl CoA by step-wise elimination of ammonia from phenylalanine by the phenylalanine ammonia-lyase str11, oxygenation by str8 and retro-Claisen reaction to form benzoic acid, which is activated to its CoA thiolester benzoyl CoA by the dedicated CoA ligase str10. Benzoyl CoA forms the starter unit for the highly reducing polyketide synthase stpks1 that produces the polyketide prestrobilutin A. The FAD-dependent oxygenase str9 then catalyzes the key oxidative rearrangement responsible for the creation of the beta-methoxyacrylate toxophore. Str9 performs epoxidation of the 2,3 olefin of prestrobilutin A, followed by Meinwald rearrangement to furnish the aldehyde intermediate. Rapid enolization of the aldehyde intermediate would give the beta-methoxyacrylate skeleton and methylations catalyzed by str2 and str3 complete the synthesis and lead to the production of strobilurin A. The short-chain dehydrogenase stl2 and the dehydrogenase str4 play a role in the shunt pathway leading to the production of bolineol. The cluster encodes no obvious halogenase gene that could be involved in production of strobilurin B, nor any obvious dimethylallyl-transferase that could be involved in the production of strobilurin G. It is possible that unknown proteins encoded in, or near, the cluster (such as str1 or stl1) may form new classes of halogenases or dimethylally-transferases, or that the responsible genes are located elsewhere on the genome. Similarly, proteins encoded by str5/str6 hydrolases appear to have no chemical role in the biosynthesis of strobilurin A. Finally, no obvious self-resistance gene is found within the cluster. This chain is Beta-lactamase-like protein str5, found in Strobilurus tenacellus.